We begin with the raw amino-acid sequence, 259 residues long: Sorbitol-6-phosphate 2-dehydrogenase (259 aa).

Residue 4–33 (VAVVIGGGQTLGAFLCHGLAAEGYRVAVVD) coordinates NAD(+). Substrate is bound at residue Ser-141. The active-site Proton acceptor is the Tyr-154.

It belongs to the short-chain dehydrogenases/reductases (SDR) family. As to quaternary structure, homotetramer.

It catalyses the reaction D-sorbitol 6-phosphate + NAD(+) = beta-D-fructose 6-phosphate + NADH + H(+). The protein operates within carbohydrate metabolism; D-sorbitol degradation; D-fructose 6-phosphate from D-sorbitol 6-phosphate: step 1/1. In Escherichia coli (strain K12), this protein is Sorbitol-6-phosphate 2-dehydrogenase (srlD).